A 308-amino-acid chain; its full sequence is GTP cyclohydrolase FolE2 (308 aa).

Belongs to the GTP cyclohydrolase IV family.

The enzyme catalyses GTP + H2O = 7,8-dihydroneopterin 3'-triphosphate + formate + H(+). The protein operates within cofactor biosynthesis; 7,8-dihydroneopterin triphosphate biosynthesis; 7,8-dihydroneopterin triphosphate from GTP: step 1/1. In terms of biological role, converts GTP to 7,8-dihydroneopterin triphosphate. The sequence is that of GTP cyclohydrolase FolE2 from Colwellia psychrerythraea (strain 34H / ATCC BAA-681) (Vibrio psychroerythus).